The sequence spans 297 residues: Nucleotide-binding protein BMA10229_A1510 (297 aa).

8–15 provides a ligand contact to ATP; it reads GISGSGKS. A GTP-binding site is contributed by 57-60; it reads DARS.

Belongs to the RapZ-like family.

Displays ATPase and GTPase activities. In Burkholderia mallei (strain NCTC 10229), this protein is Nucleotide-binding protein BMA10229_A1510.